Here is a 254-residue protein sequence, read N- to C-terminus: Imidazole glycerol phosphate synthase subunit HisF (254 aa).

Residues Asp13 and Asp132 contribute to the active site.

This sequence belongs to the HisA/HisF family. In terms of assembly, heterodimer of HisH and HisF.

Its subcellular location is the cytoplasm. It catalyses the reaction 5-[(5-phospho-1-deoxy-D-ribulos-1-ylimino)methylamino]-1-(5-phospho-beta-D-ribosyl)imidazole-4-carboxamide + L-glutamine = D-erythro-1-(imidazol-4-yl)glycerol 3-phosphate + 5-amino-1-(5-phospho-beta-D-ribosyl)imidazole-4-carboxamide + L-glutamate + H(+). The protein operates within amino-acid biosynthesis; L-histidine biosynthesis; L-histidine from 5-phospho-alpha-D-ribose 1-diphosphate: step 5/9. IGPS catalyzes the conversion of PRFAR and glutamine to IGP, AICAR and glutamate. The HisF subunit catalyzes the cyclization activity that produces IGP and AICAR from PRFAR using the ammonia provided by the HisH subunit. The chain is Imidazole glycerol phosphate synthase subunit HisF from Sulfurovum sp. (strain NBC37-1).